A 329-amino-acid polypeptide reads, in one-letter code: Probable cell division protein WhiA (329 aa).

Residues 275-308 constitute a DNA-binding region (H-T-H motif); sequence SLEELGALADPPLTKDAVAGRIRRLLAMADKRAQ.

This sequence belongs to the WhiA family.

Involved in cell division and chromosome segregation. This Streptomyces griseus subsp. griseus (strain JCM 4626 / CBS 651.72 / NBRC 13350 / KCC S-0626 / ISP 5235) protein is Probable cell division protein WhiA.